We begin with the raw amino-acid sequence, 81 residues long: Small ribosomal subunit protein bS16 (81 aa).

The protein belongs to the bacterial ribosomal protein bS16 family.

This Agathobacter rectalis (strain ATCC 33656 / DSM 3377 / JCM 17463 / KCTC 5835 / VPI 0990) (Eubacterium rectale) protein is Small ribosomal subunit protein bS16.